Reading from the N-terminus, the 179-residue chain is Negative modulator of initiation of replication (179 aa).

It belongs to the SeqA family. Homodimer. Polymerizes to form helical filaments.

It is found in the cytoplasm. Its function is as follows. Negative regulator of replication initiation, which contributes to regulation of DNA replication and ensures that replication initiation occurs exactly once per chromosome per cell cycle. Binds to pairs of hemimethylated GATC sequences in the oriC region, thus preventing assembly of replication proteins and re-initiation at newly replicated origins. Repression is relieved when the region becomes fully methylated. This Vibrio atlanticus (strain LGP32) (Vibrio splendidus (strain Mel32)) protein is Negative modulator of initiation of replication.